Here is a 648-residue protein sequence, read N- to C-terminus: ATP-dependent zinc metalloprotease FtsH 4 (648 aa).

The Cytoplasmic portion of the chain corresponds to 1 to 6 (MKQSHK). Residues 7–27 (TLLLWVLLIMMFLAIWQFLSP) form a helical membrane-spanning segment. Residues 28-111 (DSRPATQVAF…VFFEKEDTSP (84 aa)) are Periplasmic-facing. Residues 112 to 132 (FWPGAIMYLLPTVFLLVMFYL) form a helical membrane-spanning segment. Residues 133-648 (FMRQLQAGGG…FGTPKPAPST (516 aa)) are Cytoplasmic-facing. An ATP-binding site is contributed by 205–212 (GPPGTGKT). Zn(2+) is bound at residue His427. Glu428 is an active-site residue. Zn(2+) contacts are provided by His431 and Asp504. The disordered stretch occupies residues 622–648 (YSDRDRAAKEKRRAASIFGTPKPAPST).

The protein in the central section; belongs to the AAA ATPase family. This sequence in the C-terminal section; belongs to the peptidase M41 family. As to quaternary structure, homohexamer. Requires Zn(2+) as cofactor.

It localises to the cell inner membrane. Functionally, acts as a processive, ATP-dependent zinc metallopeptidase for both cytoplasmic and membrane proteins. Plays a role in the quality control of integral membrane proteins. The chain is ATP-dependent zinc metalloprotease FtsH 4 from Sorangium cellulosum (strain So ce56) (Polyangium cellulosum (strain So ce56)).